A 347-amino-acid chain; its full sequence is Heat-inducible transcription repressor HrcA (347 aa).

It belongs to the HrcA family.

Functionally, negative regulator of class I heat shock genes (grpE-dnaK-dnaJ and groELS operons). Prevents heat-shock induction of these operons. In Enterococcus faecalis (strain ATCC 700802 / V583), this protein is Heat-inducible transcription repressor HrcA.